The sequence spans 502 residues: RNA-splicing ligase RtcB homolog 2 (502 aa).

5 residues coordinate Mn(2+): aspartate 120, cysteine 123, histidine 228, histidine 260, and histidine 354. 227–231 (NHYAE) lines the GMP pocket. Residues 354–355 (HN), 403–406 (GGSM), serine 410, and 429–432 (HGAG) contribute to the GMP site. Histidine 429 acts as the GMP-histidine intermediate in catalysis.

The protein belongs to the RtcB family. As to quaternary structure, catalytic component of the tRNA-splicing ligase complex. Mn(2+) serves as cofactor.

The enzyme catalyses a 3'-end 3'-phospho-ribonucleotide-RNA + a 5'-end dephospho-ribonucleoside-RNA + GTP = a ribonucleotidyl-ribonucleotide-RNA + GMP + diphosphate. The catalysed reaction is a 3'-end 2',3'-cyclophospho-ribonucleotide-RNA + a 5'-end dephospho-ribonucleoside-RNA + GTP + H2O = a ribonucleotidyl-ribonucleotide-RNA + GMP + diphosphate + H(+). In terms of biological role, catalytic subunit of the tRNA-splicing ligase complex that acts by directly joining spliced tRNA halves to mature-sized tRNAs by incorporating the precursor-derived splice junction phosphate into the mature tRNA as a canonical 3',5'-phosphodiester. May act as an RNA ligase with broad substrate specificity, and may function toward other RNAs. This chain is RNA-splicing ligase RtcB homolog 2, found in Culex quinquefasciatus (Southern house mosquito).